The chain runs to 196 residues: Putative NADH dehydrogenase/NAD(P)H nitroreductase SCO5049 (196 aa).

It belongs to the nitroreductase family. HadB/RutE subfamily. The cofactor is FMN.

This is Putative NADH dehydrogenase/NAD(P)H nitroreductase SCO5049 from Streptomyces coelicolor (strain ATCC BAA-471 / A3(2) / M145).